We begin with the raw amino-acid sequence, 492 residues long: Katanin p60 ATPase-containing subunit A1 (492 aa).

Residues 80–186 (STPPKASQQE…ESEPKKFDST (107 aa)) are disordered. Over residues 145–171 (PNDKGKAVRGREKKDQQNKGKEEKSKS) the composition is skewed to basic and acidic residues. Residue 250–257 (GPPGTGKT) participates in ATP binding.

Belongs to the AAA ATPase family. Katanin p60 subunit A1 subfamily. As to quaternary structure, can homooligomerize into hexameric rings, which may be promoted by interaction with microtubules. Interacts with KATNB1, which may serve as a targeting subunit.

The protein resides in the cytoplasm. Its subcellular location is the cytoskeleton. It is found in the microtubule organizing center. The protein localises to the centrosome. It localises to the spindle pole. The protein resides in the spindle. The catalysed reaction is n ATP + n H2O + a microtubule = n ADP + n phosphate + (n+1) alpha/beta tubulin heterodimers.. ATPase activity is stimulated by microtubules, which promote homooligomerization. ATP-dependent microtubule severing is stimulated by interaction with KATNB1. Functionally, catalytic subunit of a complex which severs microtubules in an ATP-dependent manner. Microtubule severing may promote rapid reorganization of cellular microtubule arrays and the release of microtubules from the centrosome following nucleation. The polypeptide is Katanin p60 ATPase-containing subunit A1 (Gallus gallus (Chicken)).